The following is a 488-amino-acid chain: Probable phenylalanine--tRNA ligase alpha subunit (488 aa).

Positions 1–146 are contains the major tRNA-Phe binding sites; it reads MSIEQDILNL…KRKLVDINKK (146 aa). L-phenylalanine is bound by residues T315, 363-365, and Y403; that span reads QVE. Mg(2+) is bound at residue E405. F429 contacts L-phenylalanine.

The protein belongs to the class-II aminoacyl-tRNA synthetase family. Phe-tRNA synthetase alpha subunit type 2 subfamily. As to quaternary structure, tetramer of two alpha and two beta subunits. Mg(2+) serves as cofactor.

It localises to the cytoplasm. It carries out the reaction tRNA(Phe) + L-phenylalanine + ATP = L-phenylalanyl-tRNA(Phe) + AMP + diphosphate + H(+). The chain is Probable phenylalanine--tRNA ligase alpha subunit from Enterocytozoon bieneusi (strain H348) (Microsporidian parasite).